The sequence spans 88 residues: Small ribosomal subunit protein bS20 (88 aa).

2 disordered regions span residues 1–22 (MPNIKSAIKRVKTNEKRRAQNA) and 69–88 (KNAASRQKSRLAKKLNGLSA).

It belongs to the bacterial ribosomal protein bS20 family.

In terms of biological role, binds directly to 16S ribosomal RNA. The polypeptide is Small ribosomal subunit protein bS20 (Shouchella clausii (strain KSM-K16) (Alkalihalobacillus clausii)).